The following is a 1281-amino-acid chain: Protein ETHYLENE-INSENSITIVE 2 (1281 aa).

Residues 1 to 21 (MDGQQLRSSESPASGGGGVTG) are Cytoplasmic-facing. Residues 22–42 (GGAPHLFHALGPALLISIGYI) traverse the membrane as a helical segment. Over 43–61 (DLGKWVAAVEAGSRFGLDL) the chain is Extracellular. A helical membrane pass occupies residues 62-82 (VLLALLFNFMAILCQYLAACI). Residues 83-112 (GTVTGRSLAEICHQEYSRPTCIFLGVQAGL) are Cytoplasmic-facing. The helical transmembrane segment at 113–133 (SLLTSELTMIFGIALGFNLLF) threads the bilayer. The Extracellular portion of the chain corresponds to 134 to 137 (EYDD). A helical membrane pass occupies residues 138–158 (LITGICFATVVPNLLPYAISH). The Cytoplasmic portion of the chain corresponds to 159–163 (LGKKM). Residues 164–184 (VGTLNACIAGFALLCYVLGLL) form a helical membrane-spanning segment. Residues 185 to 208 (VSQPQIPLTTNVIFPKLSGESAYS) are Extracellular-facing. Residues 209-229 (LMALLGANVMAHNFYIHSSVV) traverse the membrane as a helical segment. At 230–238 (QGQKRSAFA) the chain is on the cytoplasmic side. Residues 239-259 (VGALFHDHLFSVLFIFTGIFL) form a helical membrane-spanning segment. The Extracellular segment spans residues 260–297 (VNHVLMNSAAADSTNTLLLTFQDVVELMNQIFVNPMAP). A helical membrane pass occupies residues 298 to 318 (TIFLVVLLFSSHIISLTSAIG). The Cytoplasmic portion of the chain corresponds to 319 to 325 (SQVISQH). The helical transmembrane segment at 326 to 346 (LFGINLPLSGHHLILKAFAIV) threads the bilayer. The Extracellular portion of the chain corresponds to 347-362 (PALYCAKVAGAEGIYQ). A helical transmembrane segment spans residues 363 to 383 (LLIICQIIQAMLLPSSVVPLF). The Cytoplasmic portion of the chain corresponds to 384–400 (RVASSRLIMGAHRVSLH). The helical transmembrane segment at 401 to 421 (LEILTFLAFLLMLFSNIIFMA) threads the bilayer. Topologically, residues 422 to 447 (EMLFGDSGWLNTLKGNTGSPVVFPST) are extracellular. Residues 448 to 468 (VLITVACVSVAFSLYMAVTPL) traverse the membrane as a helical segment. Over 469 to 1281 (KSGSHEAELQ…KRRLSSKGQQ (813 aa)) the chain is Cytoplasmic. 2 disordered regions span residues 540–565 (IESD…SPSF) and 593–665 (ESTV…NGSG). A compositionally biased stretch (polar residues) spans 548–557 (HSTAHTSTAP). Over residues 599–610 (VDSKSTGERDIE) the composition is skewed to basic and acidic residues.

It belongs to the NRAMP (TC 2.A.55) family. As to expression, expressed in roots, leaf sheaths, leaf blades, flowers, developing seeds, germinating seeds and young seedlings. Expressed in adventitious roots, vascular tissues of the seminal roots, lateral roots, the connecting region between vascular tissues and lateral roots, mature leaf, mature stem, tips of adventitious roots derived from the node, shoot apex, young panicle, anthers, pistil, stigma, ovary, seed coat and fruit coat pericarp.

The protein localises to the membrane. Its function is as follows. Central factor in ethylene signaling pathways that control development, senescence and grain size. Acts as a positive component of the ethylene-signaling pathway. The chain is Protein ETHYLENE-INSENSITIVE 2 from Oryza sativa subsp. japonica (Rice).